Here is a 416-residue protein sequence, read N- to C-terminus: Heat shock protein DDB_G0280215 (416 aa).

The region spanning 37 to 150 (SMDWGWKPRM…SQHISLFGRE (114 aa)) is the sHSP domain. The disordered stretch occupies residues 216–235 (ETKERERRIRDTKGETEKKK).

It belongs to the small heat shock protein (HSP20) family.

This Dictyostelium discoideum (Social amoeba) protein is Heat shock protein DDB_G0280215.